Here is a 452-residue protein sequence, read N- to C-terminus: MKASAVTAALAVGASTVLAAPSIKARDDVTPITVKGNAFFKGAERFYIRGVDYQPGGSSDLADPIADADGCKRDIAKFKELGLNTIRVYSVDNSKNHDECMNALADAGIYLVLDVNTPKYSINRAKPKESYNDVYLQYIFATVDAFAGYKNTLAFFSGNEVINDGPSSSAAPYVKAVTRDLRQYIRSRKYREIPVGYSAADIDTNRLQMAQYMNCGSDDERSDFFAFNDYSWCDPSSFKTSGWDQKVKNFTGYGLPLFLSEYGCNTNKRQFQEVSSLYSTDMTGVYSGGLVYEYSQEASNYGLVEISGNNVKELPDFDALKTAFEKTSNPSGDGNYNKTGGANPCPAKDAPNWDVDNDALPAIPEPAKKYMTEGAGKGPGFAGPGSQDRGTQSTATAEPGSGSATGSSSSGTSTSSKGAAAGLTVPSLTMAPVVVGAVTLLSTVFGAGLVLL.

The first 19 residues, 1–19, serve as a signal peptide directing secretion; that stretch reads MKASAVTAALAVGASTVLA. Cysteines 71 and 100 form a disulfide. Residues Tyr-89, Asn-159, Glu-160, Asp-201, and Arg-206 each coordinate (1,3-beta-D-glucosyl)n. Glu-160 functions as the Proton donor in the catalytic mechanism. 2 disulfides stabilise this stretch: Cys-215/Cys-345 and Cys-233/Cys-264. Residue Asn-249 is glycosylated (N-linked (GlcNAc...) asparagine). The Nucleophile role is filled by Glu-261. Tyr-292 contributes to the (1,3-beta-D-glucosyl)n binding site. Residues 325-340 are compositionally biased toward polar residues; the sequence is EKTSNPSGDGNYNKTG. A disordered region spans residues 325-419; sequence EKTSNPSGDG…SGTSTSSKGA (95 aa). Asn-337 is a glycosylation site (N-linked (GlcNAc...) asparagine). Residues 393–419 are compositionally biased toward low complexity; that stretch reads STATAEPGSGSATGSSSSGTSTSSKGA. Ala-419 carries GPI-like-anchor amidated alanine lipidation. Positions 420–452 are cleaved as a propeptide — removed in mature form; that stretch reads AAGLTVPSLTMAPVVVGAVTLLSTVFGAGLVLL.

This sequence belongs to the glycosyl hydrolase 72 family. The GPI-like anchor contains a phosphoceramide lipid group.

The protein localises to the cell membrane. Functionally, splits internally a 1,3-beta-glucan molecule and transfers the newly generated reducing end (the donor) to the non-reducing end of another 1,3-beta-glucan molecule (the acceptor) forming a 1,3-beta linkage, resulting in the elongation of 1,3-beta-glucan chains in the cell wall. Involved in cell wall morphogenesis. This is 1,3-beta-glucanosyltransferase gel1 (gel1) from Aspergillus fumigatus (strain ATCC MYA-4609 / CBS 101355 / FGSC A1100 / Af293) (Neosartorya fumigata).